Reading from the N-terminus, the 149-residue chain is NPC intracellular cholesterol transporter 2 (149 aa).

An N-terminal signal peptide occupies residues 1–19 (MRFLAATILLLALVAASQA). 3 disulfides stabilise this stretch: Cys27–Cys140, Cys42–Cys47, and Cys93–Cys99. Asn58 and Asn69 each carry an N-linked (GlcNAc...) asparagine glycan. Residue Lys116 is modified to N6-acetyllysine.

Belongs to the NPC2 family. As to quaternary structure, interacts with NPC1 (via the second lumenal domain) in a cholestrol-dependent manner. Interacts with NUS1/NgBR, the interaction stabilizes NCP2 and regulates cholesterol trafficking. Interacts with DHDDS. Interacts with NEDD4L (via C2 domain). Interacts with NPC1L1. In terms of processing, N-glycosylated. In terms of tissue distribution, detected in liver and bile. Detected in epididymis (at protein level). Detected in caput epididymis, corpus epididymis, cauda epididymis and ovary.

It is found in the secreted. Its subcellular location is the endoplasmic reticulum. The protein localises to the lysosome. The enzyme catalyses cholesterol(in) = cholesterol(out). Intracellular cholesterol transporter which acts in concert with NPC1 and plays an important role in the egress of cholesterol from the lysosomal compartment. Unesterified cholesterol that has been released from LDLs in the lumen of the late endosomes/lysosomes is transferred by NPC2 to the cholesterol-binding pocket in the N-terminal domain of NPC1. May bind and mobilize cholesterol that is associated with membranes. NPC2 binds cholesterol with a 1:1 stoichiometry. Can bind a variety of sterols, including lathosterol, desmosterol and the plant sterols stigmasterol and beta-sitosterol. The secreted form of NCP2 regulates biliary cholesterol secretion via stimulation of ABCG5/ABCG8-mediated cholesterol transport. In Mus musculus (Mouse), this protein is NPC intracellular cholesterol transporter 2.